The chain runs to 283 residues: Pantothenate synthetase (283 aa).

30–37 (MGYLHEGH) is a binding site for ATP. Histidine 37 acts as the Proton donor in catalysis. Residue glutamine 61 coordinates (R)-pantoate. A beta-alanine-binding site is contributed by glutamine 61. 147–150 (GRKD) provides a ligand contact to ATP. Glutamine 153 contacts (R)-pantoate. ATP-binding positions include valine 176 and 184–187 (MSSR).

The protein belongs to the pantothenate synthetase family. In terms of assembly, homodimer.

The protein localises to the cytoplasm. It catalyses the reaction (R)-pantoate + beta-alanine + ATP = (R)-pantothenate + AMP + diphosphate + H(+). Its pathway is cofactor biosynthesis; (R)-pantothenate biosynthesis; (R)-pantothenate from (R)-pantoate and beta-alanine: step 1/1. Functionally, catalyzes the condensation of pantoate with beta-alanine in an ATP-dependent reaction via a pantoyl-adenylate intermediate. This is Pantothenate synthetase from Syntrophotalea carbinolica (strain DSM 2380 / NBRC 103641 / GraBd1) (Pelobacter carbinolicus).